The following is a 155-amino-acid chain: 3-hydroxyacyl-[acyl-carrier-protein] dehydratase FabZ (155 aa).

The active site involves H54.

This sequence belongs to the thioester dehydratase family. FabZ subfamily.

It is found in the cytoplasm. It catalyses the reaction a (3R)-hydroxyacyl-[ACP] = a (2E)-enoyl-[ACP] + H2O. Its function is as follows. Involved in unsaturated fatty acids biosynthesis. Catalyzes the dehydration of short chain beta-hydroxyacyl-ACPs and long chain saturated and unsaturated beta-hydroxyacyl-ACPs. This is 3-hydroxyacyl-[acyl-carrier-protein] dehydratase FabZ from Burkholderia mallei (strain NCTC 10247).